The primary structure comprises 180 residues: Segregation and condensation protein B (180 aa).

It belongs to the ScpB family. In terms of assembly, homodimer. Homodimerization may be required to stabilize the binding of ScpA to the Smc head domains. Component of a cohesin-like complex composed of ScpA, ScpB and the Smc homodimer, in which ScpA and ScpB bind to the head domain of Smc. The presence of the three proteins is required for the association of the complex with DNA.

It localises to the cytoplasm. Its function is as follows. Participates in chromosomal partition during cell division. May act via the formation of a condensin-like complex containing Smc and ScpA that pull DNA away from mid-cell into both cell halves. This is Segregation and condensation protein B from Staphylococcus aureus (strain MSSA476).